The following is a 219-amino-acid chain: Deoxyribose-phosphate aldolase (219 aa).

The Proton donor/acceptor role is filled by Asp92. The active-site Schiff-base intermediate with acetaldehyde is Lys154. The Proton donor/acceptor role is filled by Lys183.

Belongs to the DeoC/FbaB aldolase family. DeoC type 1 subfamily.

Its subcellular location is the cytoplasm. The enzyme catalyses 2-deoxy-D-ribose 5-phosphate = D-glyceraldehyde 3-phosphate + acetaldehyde. It participates in carbohydrate degradation; 2-deoxy-D-ribose 1-phosphate degradation; D-glyceraldehyde 3-phosphate and acetaldehyde from 2-deoxy-alpha-D-ribose 1-phosphate: step 2/2. Its function is as follows. Catalyzes a reversible aldol reaction between acetaldehyde and D-glyceraldehyde 3-phosphate to generate 2-deoxy-D-ribose 5-phosphate. The chain is Deoxyribose-phosphate aldolase from Dictyoglomus turgidum (strain DSM 6724 / Z-1310).